We begin with the raw amino-acid sequence, 165 residues long: Hydroxyproline-rich systemin A (165 aa).

The signal sequence occupies residues 1-18 (MRVLFLIYLILSPFGAEA). Residues 19–35 (RTLLENHEGLNVGSGYG) constitute a propeptide that is removed on maturation. Disordered stretches follow at residues 33 to 70 (GYGRGANLPPPSPASSPPSKEVSNSVSPTRTDEKTSEN) and 142 to 165 (YWNRKPLSPPSPKPADGQRPLHSY). A 4-hydroxyproline mark is found at P42, P43, P45, P49, and P50. O-linked (Ara...) hydroxyproline glycosylation is found at P42, P43, P45, P49, and P50. Residues 54–143 (VSNSVSPTRT…FDSKSDERYW (90 aa)) constitute a propeptide that is removed on maturation. 3 positions are modified to 4-hydroxyproline: P150, P151, and P153. 3 O-linked (Ara...) hydroxyproline glycosylation sites follow: P150, P151, and P153. A propeptide spanning residues 162–165 (LHSY) is cleaved from the precursor.

Post-translationally, O-glycosylated; contains pentose side chains. In terms of tissue distribution, expressed in leaves.

The protein localises to the secreted. Its function is as follows. Activates a lipid-based signal transduction pathway in which linolenic acid is converted to jasmonic acid, a potent activator of defense gene transcription, including proteinase inhibitors. The protein is Hydroxyproline-rich systemin A of Nicotiana tabacum (Common tobacco).